We begin with the raw amino-acid sequence, 1582 residues long: ATP-binding cassette sub-family C member 8 (1582 aa).

Over 1–30 (MPLAFCGTENHSAAYRVDQGVLNNGCFVDA) the chain is Extracellular. Cys6 and Cys26 are oxidised to a cystine. Asn10 carries N-linked (GlcNAc...) asparagine glycosylation. A helical transmembrane segment spans residues 31–47 (LNVVPHVFLLFITFPIL). Residues 48 to 72 (FIGWGSQSSKVHIHHSTWLHFPGHN) lie on the Cytoplasmic side of the membrane. A helical transmembrane segment spans residues 73 to 89 (LRWILTFILLFVLVCEI). Over 90 to 106 (AEGILSDGVTESRHLHL) the chain is Extracellular. The helical transmembrane segment at 107-123 (YMPAGMAFMAAITSVVY) threads the bilayer. The Cytoplasmic segment spans residues 124–136 (YHNIETSNFPKLL). A helical membrane pass occupies residues 137 to 153 (IALLIYWTLAFITKTIK). At 154–169 (FVKFYDHAIGFSQLRF) the chain is on the extracellular side. A helical transmembrane segment spans residues 170–186 (CLTGLLVILYGMLLLVE). Residues 187-303 (VNVIRVRRYI…AFGRRLILSS (117 aa)) lie on the Cytoplasmic side of the membrane. The ABC transmembrane type-1 1 domain maps to 299–602 (LILSSTFRIL…LSSVVRSTVK (304 aa)). A helical transmembrane segment spans residues 304 to 319 (TFRILADLLGFAGPLC). The Extracellular segment spans residues 320-356 (IFGIVDHLGKENHVFQPKTQFLGVYFVSSQEFLGNAY). A helical transmembrane segment spans residues 357 to 372 (VLAVLLFLALLLQRTF). Residues 373–438 (LQASYYVAIE…MWFFFLCPNL (66 aa)) are Cytoplasmic-facing. Residues 439–454 (WTMPVQIIVGVILLYY) form a helical membrane-spanning segment. Residues 455 to 460 (ILGVSA) are Extracellular-facing. A helical transmembrane segment spans residues 461-473 (LIGAAVIILLAPV). The Cytoplasmic portion of the chain corresponds to 474-541 (QYFVATKLSQ…SLRAFAVYTS (68 aa)). A helical membrane pass occupies residues 542–557 (ISIFMNTAIPIAAVLI). Topologically, residues 558–576 (TFVGHVSFFKESDLSPSVA) are extracellular. The chain crosses the membrane as a helical span at residues 577–592 (FASLSLFHILVTPLFL). Topologically, residues 593 to 1013 (LSSVVRSTVK…YLSSAGILLL (421 aa)) are cytoplasmic. The ABC transporter 1 domain occupies 679 to 930 (VQIIGGFFTW…ECQLFEHWKT (252 aa)). Trp688, Gly716, Ser720, and Ser721 together coordinate ATP. Position 720 (Ser720) interacts with Mg(2+). Residues 741-766 (SNLPDSEGEDPSSPERETAAGSDIRS) form a disordered region. Gln775 is a Mg(2+) binding site. Residues 939-950 (LEKETVMERKAS) are compositionally biased toward basic and acidic residues. A disordered region spans residues 939 to 962 (LEKETVMERKASEPSQGLPRAMSS). One can recognise an ABC transmembrane type-1 2 domain in the interval 1013–1307 (LSLLVFSQLL…MVRNLADMEI (295 aa)). A helical transmembrane segment spans residues 1014-1031 (SLLVFSQLLKHMVLVAID). Over 1032–1067 (YWLAKWTDSALVLSPAARNCSLSQECDLDQSVYAMV) the chain is Extracellular. Asn1050 carries N-linked (GlcNAc...) asparagine glycosylation. The helical transmembrane segment at 1068–1084 (FTLLCSLGIVLCLVTSV) threads the bilayer. At 1085-1143 (TVEWTGLKVAKRLHRSLLNRIILAPMRFFETTPLGSILNRFSSDCNTIDQHIPSTLECL) the chain is on the cytoplasmic side. A helical transmembrane segment spans residues 1144 to 1161 (SRSTLLCVSALTVISYVT). Position 1162 (Pro1162) is a topological domain, extracellular. Residues 1163–1175 (VFLVALLPLAVVC) traverse the membrane as a helical segment. At 1176 to 1249 (YFIQKYFRVA…FLTAANRWLE (74 aa)) the chain is on the cytoplasmic side. A helical transmembrane segment spans residues 1250-1265 (VCMEYIGACVVLIAAA). Topologically, residues 1266 to 1281 (TSISNSLHRELSAGLV) are extracellular. A helical membrane pass occupies residues 1282–1297 (GLGLTYALMVSNYLNW). The Cytoplasmic segment spans residues 1298-1582 (MVRNLADMEI…VFASFVRADK (285 aa)). The ABC transporter 2 domain maps to 1345 to 1579 (IQIQNLSVRY…KDSVFASFVR (235 aa)). 6 residues coordinate ADP: Thr1381, Gly1382, Gly1384, Lys1385, Ser1386, and Ser1387. Ser1483 is a binding site for ATP.

This sequence belongs to the ABC transporter superfamily. ABCC family. Conjugate transporter (TC 3.A.1.208) subfamily. As to quaternary structure, forms an heterooctamer with KCNJ11; four ABCC8/SUR1 molecules interact with one KCNJ11 homotetramer.

It is found in the cell membrane. KATP channels are regulated by cytoplasmic ATP/ADP ratios; ATP inhibits the channel by closing the pore, while ADP activates the channel. Activated by phosphatidylinositol 4,5-biphosphate (PtdIns(4,5)P2). Functionally, regulator subunit of pancreatic ATP-sensitive potassium channel (KATP), playing a major role in the regulation of insulin release. In pancreatic cells, it forms KATP channels with KCNJ11; KCNJ11 forms the channel pore while ABCC8 is required for activation and regulation. This chain is ATP-binding cassette sub-family C member 8 (ABCC8), found in Cricetus cricetus (Black-bellied hamster).